A 666-amino-acid polypeptide reads, in one-letter code: DNA mismatch repair protein MutL (666 aa).

It belongs to the DNA mismatch repair MutL/HexB family.

This protein is involved in the repair of mismatches in DNA. It is required for dam-dependent methyl-directed DNA mismatch repair. May act as a 'molecular matchmaker', a protein that promotes the formation of a stable complex between two or more DNA-binding proteins in an ATP-dependent manner without itself being part of a final effector complex. The polypeptide is DNA mismatch repair protein MutL (Clostridium botulinum (strain ATCC 19397 / Type A)).